The primary structure comprises 291 residues: Tryptophan 2,3-dioxygenase (291 aa).

Substrate is bound by residues 51–55, Tyr113, and Arg117; that span reads FIIQH. His240 lines the heme pocket. Residue Thr254 coordinates substrate.

It belongs to the tryptophan 2,3-dioxygenase family. As to quaternary structure, homotetramer. The cofactor is heme.

It catalyses the reaction L-tryptophan + O2 = N-formyl-L-kynurenine. The protein operates within amino-acid degradation; L-tryptophan degradation via kynurenine pathway; L-kynurenine from L-tryptophan: step 1/2. Its function is as follows. Heme-dependent dioxygenase that catalyzes the oxidative cleavage of the L-tryptophan (L-Trp) pyrrole ring and converts L-tryptophan to N-formyl-L-kynurenine. Catalyzes the oxidative cleavage of the indole moiety. The polypeptide is Tryptophan 2,3-dioxygenase (Myxococcus xanthus (strain DK1622)).